The following is a 494-amino-acid chain: MFQVQKELAGHEAVIVALFEEEKMSSFVQELDKAFEGQLQVLLEEKELSTKKKAISKVHSLGKTNVKRYYFVGLGKKESYTTETLRAALGKAFKTLQAAKVQDAAILLDSFVTEKLDAIDVAHIAAEVQGLGTYELQTYKSDKKDRVELEKFMAITSEDAQEIEAALTVGYVHGRATNSARTLVNMPPNVLTATKLAEYAVELAEKYDMDYKVLEKEEMEDLGMGALLAVNQGSVEPPKMIALIYKGKEEWKDVIGFVGKGITYDTGGYSLKPREGMVGMKGDMGGAAAVLGAMEIIGELRPEQNVIAVIPSTDNVVSGTAFKPDDVITSMSGKTIEVLNTDAEGRLALADGITYAKKLGANYLVDVATLTGGVIVALGNYTTGAMTNNEELFEQVLEASMETDEPIWQLPIFDRDKERVRNSKFADLNNSPGREGHAVMAGTFLGEFAEDTPWVHLDIAGTSETKGAHDLGPAGATGAMVRTLATLVERFGEE.

Residues Lys260 and Asp265 each contribute to the Mn(2+) site. Lys272 is an active-site residue. The Mn(2+) site is built by Asp283, Asp342, and Glu344. Arg346 is an active-site residue.

It belongs to the peptidase M17 family. The cofactor is Mn(2+).

It localises to the cytoplasm. It catalyses the reaction Release of an N-terminal amino acid, Xaa-|-Yaa-, in which Xaa is preferably Leu, but may be other amino acids including Pro although not Arg or Lys, and Yaa may be Pro. Amino acid amides and methyl esters are also readily hydrolyzed, but rates on arylamides are exceedingly low.. The catalysed reaction is Release of an N-terminal amino acid, preferentially leucine, but not glutamic or aspartic acids.. Its function is as follows. Presumably involved in the processing and regular turnover of intracellular proteins. Catalyzes the removal of unsubstituted N-terminal amino acids from various peptides. The chain is Probable cytosol aminopeptidase from Bacillus cereus (strain ATCC 14579 / DSM 31 / CCUG 7414 / JCM 2152 / NBRC 15305 / NCIMB 9373 / NCTC 2599 / NRRL B-3711).